The sequence spans 453 residues: Probable glycine dehydrogenase (decarboxylating) subunit 1 (453 aa).

This sequence belongs to the GcvP family. N-terminal subunit subfamily. As to quaternary structure, the glycine cleavage system is composed of four proteins: P, T, L and H. In this organism, the P 'protein' is a heterodimer of two subunits.

It catalyses the reaction N(6)-[(R)-lipoyl]-L-lysyl-[glycine-cleavage complex H protein] + glycine + H(+) = N(6)-[(R)-S(8)-aminomethyldihydrolipoyl]-L-lysyl-[glycine-cleavage complex H protein] + CO2. Functionally, the glycine cleavage system catalyzes the degradation of glycine. The P protein binds the alpha-amino group of glycine through its pyridoxal phosphate cofactor; CO(2) is released and the remaining methylamine moiety is then transferred to the lipoamide cofactor of the H protein. The protein is Probable glycine dehydrogenase (decarboxylating) subunit 1 of Erythrobacter litoralis (strain HTCC2594).